Here is a 60-residue protein sequence, read N- to C-terminus: Ras-related protein Rab-2A (60 aa).

The GTP site is built by Ser-1, Cys-2, and Thr-19. Mg(2+) is bound at residue Ser-1. An Effector region motif is present at residues 16 to 24; the sequence is HDLTIGVEF. Thr-19 is a binding site for Mg(2+).

Belongs to the small GTPase superfamily. Rab family. Interacts with PRKCI. Interacts with TRIP11. Interacts (in GTP-bound form) with GARIN1B. Interacts (GTP-bound) with HOPS complex component VPS39; interaction contributes to obtaining a functional HOPS complex that promotes autophagosome-lysosome membrane fusion driven by STX17-SNAP29-VAMP8. May interact with VPS41. It depends on Mg(2+) as a cofactor. Post-translationally, prenylated. Prenylation is required for association with cellular membranes.

It localises to the endoplasmic reticulum-Golgi intermediate compartment membrane. Its subcellular location is the melanosome. The protein resides in the endoplasmic reticulum membrane. It is found in the golgi apparatus membrane. The protein localises to the cytoplasmic vesicle. It localises to the secretory vesicle. Its subcellular location is the acrosome. The protein resides in the autophagosome membrane. It carries out the reaction GTP + H2O = GDP + phosphate + H(+). Its activity is regulated as follows. Regulated by guanine nucleotide exchange factors (GEFs) which promote the exchange of bound GDP for free GTP, GTPase activating proteins (GAPs) which increase the GTP hydrolysis activity, and GDP dissociation inhibitors (GDIs) which inhibit the dissociation of the nucleotide from the GTPase. The small GTPases Rab are key regulators of intracellular membrane trafficking, from the formation of transport vesicles to their fusion with membranes. Rabs cycle between active GTP-bound and inactive GDP-bound states. In their active state, drive transport of vesicular carriers from donor organelles to acceptor organelles to regulate the membrane traffic that maintains organelle identity and morphology. RAB2A regulates autophagy by promoting autophagosome-lysosome fusion via recruitment of the HOPS endosomal tethering complex; this process involves autophagosomal RAB2A and lysosomal RAB39A recruitment of HOPS subcomplexes VPS39-VPS11 and VPS41-VPS16-VPS18-VPS33A, respectively, which assemble into a functional complex to mediate membrane tethering and SNAREs-driven membrane fusion. Required for protein transport from the endoplasmic reticulum to the Golgi complex. Regulates the compacted morphology of the Golgi. Together with RAB2B, redundantly required for efficient autophagic flux. The protein is Ras-related protein Rab-2A of Mesocricetus auratus (Golden hamster).